The chain runs to 240 residues: 26.7 kDa heat shock protein, chloroplastic (240 aa).

Residues 1–43 (MAAPFALVSRVSPAARLPIRAAWRRARPTVGLPSSGRARQLAV) constitute a chloroplast transit peptide. A disordered region spans residues 59–84 (HVNQDGGNQQGNAVQRRPRRSSALDG). One can recognise a sHSP domain in the interval 126-240 (LATGEVRMPW…ERKVIDVQVQ (115 aa)).

The protein belongs to the small heat shock protein (HSP20) family. In terms of assembly, may form oligomeric structures. As to expression, expressed in roots, stems, leaves, spikelets and embryos.

The protein localises to the plastid. It is found in the chloroplast. The protein is 26.7 kDa heat shock protein, chloroplastic (HSP26.7) of Oryza sativa subsp. japonica (Rice).